Reading from the N-terminus, the 30-residue chain is Elongation factor 1-delta (30 aa).

The protein belongs to the EF-1-beta/EF-1-delta family. In terms of assembly, EF-1 is composed of 4 subunits: alpha, beta (1B-alpha=beta'), delta (1B-beta), and gamma (1B-gamma).

Functionally, EF-1-beta and EF-1-delta stimulate the exchange of GDP bound to EF-1-alpha to GTP. In Populus euphratica (Euphrates poplar), this protein is Elongation factor 1-delta.